Reading from the N-terminus, the 305-residue chain is UDP-3-O-acyl-N-acetylglucosamine deacetylase (305 aa).

Zn(2+)-binding residues include H79, H238, and D242. The active-site Proton donor is H265.

This sequence belongs to the LpxC family. It depends on Zn(2+) as a cofactor.

It carries out the reaction a UDP-3-O-[(3R)-3-hydroxyacyl]-N-acetyl-alpha-D-glucosamine + H2O = a UDP-3-O-[(3R)-3-hydroxyacyl]-alpha-D-glucosamine + acetate. Its pathway is glycolipid biosynthesis; lipid IV(A) biosynthesis; lipid IV(A) from (3R)-3-hydroxytetradecanoyl-[acyl-carrier-protein] and UDP-N-acetyl-alpha-D-glucosamine: step 2/6. Its function is as follows. Catalyzes the hydrolysis of UDP-3-O-myristoyl-N-acetylglucosamine to form UDP-3-O-myristoylglucosamine and acetate, the committed step in lipid A biosynthesis. The sequence is that of UDP-3-O-acyl-N-acetylglucosamine deacetylase from Vibrio vulnificus (strain CMCP6).